The following is a 395-amino-acid chain: Flagellin B (395 aa).

Belongs to the bacterial flagellin family.

The protein localises to the secreted. Its subcellular location is the bacterial flagellum. In terms of biological role, flagellin is the subunit protein which polymerizes to form the filaments of bacterial flagella. This chain is Flagellin B (flaB), found in Rhizobium meliloti (Ensifer meliloti).